The following is a 474-amino-acid chain: Proline--tRNA ligase (474 aa).

Belongs to the class-II aminoacyl-tRNA synthetase family. ProS type 3 subfamily. In terms of assembly, homodimer.

It is found in the cytoplasm. It catalyses the reaction tRNA(Pro) + L-proline + ATP = L-prolyl-tRNA(Pro) + AMP + diphosphate. Catalyzes the attachment of proline to tRNA(Pro) in a two-step reaction: proline is first activated by ATP to form Pro-AMP and then transferred to the acceptor end of tRNA(Pro). The polypeptide is Proline--tRNA ligase (Mycoplasma mycoides subsp. mycoides SC (strain CCUG 32753 / NCTC 10114 / PG1)).